A 161-amino-acid chain; its full sequence is N5-carboxyaminoimidazole ribonucleotide mutase (161 aa).

Substrate is bound by residues Ser9, Asp12, and Arg39.

The protein belongs to the AIR carboxylase family. Class I subfamily.

The catalysed reaction is 5-carboxyamino-1-(5-phospho-D-ribosyl)imidazole + H(+) = 5-amino-1-(5-phospho-D-ribosyl)imidazole-4-carboxylate. Its pathway is purine metabolism; IMP biosynthesis via de novo pathway; 5-amino-1-(5-phospho-D-ribosyl)imidazole-4-carboxylate from 5-amino-1-(5-phospho-D-ribosyl)imidazole (N5-CAIR route): step 2/2. Catalyzes the conversion of N5-carboxyaminoimidazole ribonucleotide (N5-CAIR) to 4-carboxy-5-aminoimidazole ribonucleotide (CAIR). The polypeptide is N5-carboxyaminoimidazole ribonucleotide mutase (Aliivibrio fischeri (strain ATCC 700601 / ES114) (Vibrio fischeri)).